A 568-amino-acid chain; its full sequence is Urease subunit alpha (568 aa).

Positions 130–568 (GGIDTHIHFI…LPMAQRYFLF (439 aa)) constitute a Urease domain. 3 residues coordinate Ni(2+): His135, His137, and Lys218. Residue Lys218 is modified to N6-carboxylysine. Substrate is bound at residue His220. Residues His247 and His273 each contribute to the Ni(2+) site. The active-site Proton donor is His321. Asp361 provides a ligand contact to Ni(2+).

The protein belongs to the metallo-dependent hydrolases superfamily. Urease alpha subunit family. Heterotrimer of UreA (gamma), UreB (beta) and UreC (alpha) subunits. Three heterotrimers associate to form the active enzyme. Ni cation is required as a cofactor. In terms of processing, carboxylation allows a single lysine to coordinate two nickel ions.

It localises to the cytoplasm. It catalyses the reaction urea + 2 H2O + H(+) = hydrogencarbonate + 2 NH4(+). Its pathway is nitrogen metabolism; urea degradation; CO(2) and NH(3) from urea (urease route): step 1/1. This is Urease subunit alpha from Burkholderia ambifaria (strain ATCC BAA-244 / DSM 16087 / CCUG 44356 / LMG 19182 / AMMD) (Burkholderia cepacia (strain AMMD)).